We begin with the raw amino-acid sequence, 198 residues long: Peptidyl-tRNA hydrolase (198 aa).

TRNA is bound at residue Y16. H21 acts as the Proton acceptor in catalysis. Y67, N69, and N115 together coordinate tRNA.

It belongs to the PTH family. In terms of assembly, monomer.

It is found in the cytoplasm. The catalysed reaction is an N-acyl-L-alpha-aminoacyl-tRNA + H2O = an N-acyl-L-amino acid + a tRNA + H(+). Hydrolyzes ribosome-free peptidyl-tRNAs (with 1 or more amino acids incorporated), which drop off the ribosome during protein synthesis, or as a result of ribosome stalling. Functionally, catalyzes the release of premature peptidyl moieties from peptidyl-tRNA molecules trapped in stalled 50S ribosomal subunits, and thus maintains levels of free tRNAs and 50S ribosomes. The polypeptide is Peptidyl-tRNA hydrolase (Gloeobacter violaceus (strain ATCC 29082 / PCC 7421)).